Reading from the N-terminus, the 875-residue chain is Neurotrypsin (875 aa).

Residues 1-20 (MTLARFVLALVLGALPEVVG) form the signal peptide. N-linked (GlcNAc...) asparagine glycosylation is present at asparagine 26. The interval 29 to 68 (LHHRHRHSPPPGPQYPYYLPTHQRPPRTRPPPPLPRFSRP) is disordered. The Kringle domain occupies 93–165 (CPPGEPWVSV…GKVDWGYCDC (73 aa)). Intrachain disulfides connect cysteine 93-cysteine 165, cysteine 109-cysteine 149, cysteine 138-cysteine 163, cysteine 195-cysteine 259, cysteine 208-cysteine 269, cysteine 239-cysteine 249, cysteine 305-cysteine 369, cysteine 318-cysteine 379, cysteine 349-cysteine 359, cysteine 412-cysteine 475, cysteine 425-cysteine 485, cysteine 455-cysteine 465, cysteine 525-cysteine 589, cysteine 538-cysteine 599, cysteine 569-cysteine 579, cysteine 619-cysteine 750, cysteine 661-cysteine 677, cysteine 765-cysteine 831, cysteine 794-cysteine 808, and cysteine 821-cysteine 850. 4 SRCR domains span residues 170–271 (VRLR…TCSF), 280–381 (IRLV…SCTP), 387–487 (IRLA…ACYP), and 500–601 (VRLM…ICDY). The zymogen activation region stretch occupies residues 619–630 (CGLRLLHRRQKR). One can recognise a Peptidase S1 domain in the interval 631–874 (IIGGKNSLRG…FVPWIKSVTK (244 aa)). Catalysis depends on histidine 676, which acts as the Charge relay system. Residue asparagine 683 is glycosylated (N-linked (GlcNAc...) asparagine). Aspartate 726 serves as the catalytic Charge relay system. Serine 825 functions as the Charge relay system in the catalytic mechanism.

The protein belongs to the peptidase S1 family.

It localises to the secreted. In terms of biological role, plays a role in neuronal plasticity and the proteolytic action may subserve structural reorganizations associated with learning and memory operations. In Trachypithecus phayrei (Phayre's leaf monkey), this protein is Neurotrypsin (PRSS12).